Here is a 177-residue protein sequence, read N- to C-terminus: Large ribosomal subunit protein uL6 (177 aa).

The protein belongs to the universal ribosomal protein uL6 family. Part of the 50S ribosomal subunit.

This protein binds to the 23S rRNA, and is important in its secondary structure. It is located near the subunit interface in the base of the L7/L12 stalk, and near the tRNA binding site of the peptidyltransferase center. In Bradyrhizobium sp. (strain BTAi1 / ATCC BAA-1182), this protein is Large ribosomal subunit protein uL6.